A 272-amino-acid polypeptide reads, in one-letter code: tRNA (guanine-N(7)-)-methyltransferase (272 aa).

Residues Met1–Arg20 are compositionally biased toward basic and acidic residues. The interval Met1–Tyr43 is disordered. Residues Gly89, Glu112–Ile113, Asn148–Ala149, and Cys168 each bind S-adenosyl-L-methionine. Asp171 is a catalytic residue. Residue Thr246–Glu248 coordinates S-adenosyl-L-methionine.

Belongs to the class I-like SAM-binding methyltransferase superfamily. TrmB family. In terms of assembly, forms a complex with TRM82.

Its subcellular location is the nucleus. The catalysed reaction is guanosine(46) in tRNA + S-adenosyl-L-methionine = N(7)-methylguanosine(46) in tRNA + S-adenosyl-L-homocysteine. It functions in the pathway tRNA modification; N(7)-methylguanine-tRNA biosynthesis. In terms of biological role, catalyzes the formation of N(7)-methylguanine at position 46 (m7G46) in tRNA. In Meyerozyma guilliermondii (strain ATCC 6260 / CBS 566 / DSM 6381 / JCM 1539 / NBRC 10279 / NRRL Y-324) (Yeast), this protein is tRNA (guanine-N(7)-)-methyltransferase.